A 1311-amino-acid chain; its full sequence is Transcriptional regulator ATRX homolog (1311 aa).

The disordered stretch occupies residues Met1–Arg384. A compositionally biased stretch (basic and acidic residues) spans Ser28–Ser40. The segment covering Lys61–Ala83 has biased composition (low complexity). Polar residues predominate over residues Arg114 to Asp125. Residues Ser126 and Ser127 each carry the phosphoserine modification. Positions Ser155 to Ser166 are enriched in acidic residues. Basic and acidic residues predominate over residues Lys181–Lys202. Positions Arg219–Glu237 are enriched in low complexity. Residues Arg241–Lys265 are compositionally biased toward basic residues. A phosphoserine mark is found at Ser267, Ser268, and Ser270. The segment covering Glu290–Glu306 has biased composition (acidic residues). Residues Ser336, Ser338, Ser342, and Ser343 each carry the phosphoserine modification. The span at Ser336–Gln351 shows a compositional bias: basic and acidic residues. Positions Lys352–Lys361 are enriched in basic residues. The Helicase ATP-binding domain maps to Glu476 to Asn664. His489 to Thr496 contributes to the ATP binding site. The short motif at Asp615–His618 is the DEGH box element. The disordered stretch occupies residues Ala837–Pro878. Phosphoserine occurs at positions 857 and 859. One can recognise a Helicase C-terminal domain in the interval Arg905 to Met1085. A disordered region spans residues Met1285–Asp1311.

Belongs to the SNF2/RAD54 helicase family.

The protein localises to the nucleus. The protein resides in the chromosome. It catalyses the reaction ATP + H2O = ADP + phosphate + H(+). Functionally, global transcriptional regulator. Modifies gene expression by affecting chromatin. The polypeptide is Transcriptional regulator ATRX homolog (XNP) (Drosophila melanogaster (Fruit fly)).